Consider the following 299-residue polypeptide: Ribosomal RNA small subunit methyltransferase A (299 aa).

S-adenosyl-L-methionine-binding residues include Asn44, Val46, Gly71, Glu92, Asp122, and Asn141.

This sequence belongs to the class I-like SAM-binding methyltransferase superfamily. rRNA adenine N(6)-methyltransferase family. RsmA subfamily.

The protein resides in the cytoplasm. The catalysed reaction is adenosine(1518)/adenosine(1519) in 16S rRNA + 4 S-adenosyl-L-methionine = N(6)-dimethyladenosine(1518)/N(6)-dimethyladenosine(1519) in 16S rRNA + 4 S-adenosyl-L-homocysteine + 4 H(+). Specifically dimethylates two adjacent adenosines (A1518 and A1519) in the loop of a conserved hairpin near the 3'-end of 16S rRNA in the 30S particle. May play a critical role in biogenesis of 30S subunits. In Rhodococcus erythropolis (strain PR4 / NBRC 100887), this protein is Ribosomal RNA small subunit methyltransferase A.